A 218-amino-acid polypeptide reads, in one-letter code: Large ribosomal subunit protein bL25 (218 aa).

The tract at residues 186-218 (AVEEEVPAEDEEIMPEPEVIGEEDEGDEEEPEE) is disordered.

Belongs to the bacterial ribosomal protein bL25 family. CTC subfamily. As to quaternary structure, part of the 50S ribosomal subunit; part of the 5S rRNA/L5/L18/L25 subcomplex. Contacts the 5S rRNA. Binds to the 5S rRNA independently of L5 and L18.

Its function is as follows. This is one of the proteins that binds to the 5S RNA in the ribosome where it forms part of the central protuberance. This is Large ribosomal subunit protein bL25 from Halothermothrix orenii (strain H 168 / OCM 544 / DSM 9562).